The primary structure comprises 79 residues: MIFTPFLPPADLSVFQNVKGPQKDPEELVAVSDTAEDPSSGTGLPREPALLRGSWRSRFQRALACFIKCFRGGYRALGI.

Residues 19–48 form a disordered region; that stretch reads KGPQKDPEELVAVSDTAEDPSSGTGLPREP.

The protein belongs to the FAM236 family.

The protein is Protein FAM236C of Homo sapiens (Human).